The chain runs to 512 residues: MSQTEEKKGIGRRVQAFGSFLSSMIMPNIGAFIAWGFIAAIFIDNGWFPNKDLATLAGPMITYLIPLLIAFSGGRLIYDLRGGIIAATATMGVIVALPDTPMLLGAMIMGPLVGWLMKKTDQLIQPRTPQGFEMLFNNFSAGILGFIMTIAGFKILAPLMKFIMHILSVAVEALVHAHLLPLVSILVEPAKIVFLNNAINHGVFTPLGADQAAKAGQSILYTIESNPGPGLGILLAYMIFGKGTAKATSYGAGIIHFFGGIHEIYFPYVLMRPLLFIAVILGGMTGVATYQATGFGFKSPASPGSFIVYCLNAPRGEFLHMLLGVFLATLVSFVVAALIMKFTKEPKQDLEAATAQMETTKGKKSSVASKLVSSDKNVNTEENASGNVSETSSLDDDPEALLDNYNTEDVDAHNYNNINHVIFACDAGMGSSAMGASMLRNKFKKAGINDITVTNTAINQLPKDAQLVITQKKLTDRAIKQTPNAIHISVDNFLNSPRYEELLNNLKKDDQA.

Over 1-28 (MSQTEEKKGIGRRVQAFGSFLSSMIMPN) the chain is Cytoplasmic. The region spanning 17–349 (FGSFLSSMIM…MKFTKEPKQD (333 aa)) is the PTS EIIC type-2 domain. Residues 29-50 (IGAFIAWGFIAAIFIDNGWFPN) form a helical membrane-spanning segment. Over 51-54 (KDLA) the chain is Extracellular. The chain crosses the membrane as a helical span at residues 55–75 (TLAGPMITYLIPLLIAFSGGR). Over 76–139 (LIYDLRGGII…QGFEMLFNNF (64 aa)) the chain is Cytoplasmic. The helical transmembrane segment at 140-161 (SAGILGFIMTIAGFKILAPLMK) threads the bilayer. Residues 162-170 (FIMHILSVA) are Extracellular-facing. Residues 171–191 (VEALVHAHLLPLVSILVEPAK) form a helical membrane-spanning segment. The Cytoplasmic segment spans residues 192–278 (IVFLNNAINH…VLMRPLLFIA (87 aa)). Residues 279–298 (VILGGMTGVATYQATGFGFK) traverse the membrane as a helical segment. The Extracellular portion of the chain corresponds to 299–318 (SPASPGSFIVYCLNAPRGEF). A helical transmembrane segment spans residues 319–340 (LHMLLGVFLATLVSFVVAALIM). Residues 341-512 (KFTKEPKQDL…LNNLKKDDQA (172 aa)) lie on the Cytoplasmic side of the membrane. Residues 365 to 376 (SSVASKLVSSDK) show a composition bias toward low complexity. The segment at 365–401 (SSVASKLVSSDKNVNTEENASGNVSETSSLDDDPEAL) is disordered. Over residues 380–392 (TEENASGNVSETS) the composition is skewed to polar residues. Residues 419–512 (NHVIFACDAG…LNNLKKDDQA (94 aa)) enclose the PTS EIIB type-2 domain. Cys425 functions as the Phosphocysteine intermediate; for EIIB activity in the catalytic mechanism. Cys425 is subject to Phosphocysteine; by EIIA.

As to quaternary structure, homodimer.

The protein resides in the cell membrane. The catalysed reaction is D-mannitol(out) + N(pros)-phospho-L-histidyl-[protein] = D-mannitol 1-phosphate(in) + L-histidyl-[protein]. Its function is as follows. The phosphoenolpyruvate-dependent sugar phosphotransferase system (sugar PTS), a major carbohydrate active transport system, catalyzes the phosphorylation of incoming sugar substrates concomitantly with their translocation across the cell membrane. The enzyme II CmtAB PTS system is involved in D-mannitol transport. The protein is PTS system mannitol-specific EIICB component (mtlA) of Staphylococcus aureus (strain MRSA252).